We begin with the raw amino-acid sequence, 8886 residues long: Obscurin (8886 aa).

4 consecutive Ig-like domains span residues 9–99 (PRFL…LRVD), 109–201 (PHFL…LVVD), 234–320 (PPSP…QTYS), and 329–415 (PTVP…AELS). The cysteines at positions 30 and 81 are disulfide-linked. The segment at 135-165 (SPQPAVSWSKDGRRLGPPDAPHVRVEEHGES) is disordered. Positions 144–164 (KDGRRLGPPDAPHVRVEEHGE) are enriched in basic and acidic residues. 2 disulfide bridges follow: cysteine 257-cysteine 309 and cysteine 352-cysteine 402. Serine 393 bears the Phosphoserine mark. The Fibronectin type-III 1 domain maps to 513 to 610 (PPADPVVKAK…FPGTMHLVPM (98 aa)). 43 consecutive Ig-like domains span residues 702–793 (PSSK…QDIT), 859–951 (PKLV…VAEP), 951–1043 (PKLV…VAEP), 1043–1135 (PKMV…VTEP), 1135–1227 (PKLV…VAEP), 1227–1319 (PKLV…VTEP), 1319–1407 (PKLV…FRLD), 1411–1503 (PKLV…VAEP), 1503–1595 (PKLV…VAEP), 1595–1687 (PKLA…VAEP), 1687–1779 (PKLA…VAEP), 1779–1871 (PKLA…VAEP), 1871–1963 (PKLM…VAEP), 1963–2051 (PKLV…FRLD), 2055–2147 (TRLM…VAEA), 2152–2241 (PERP…EEVA), 2242–2325 (AKFS…ARLT), 2329–2415 (PRVV…AALR), 2420–2504 (PVLF…AKLN), 2598–2681 (PVSF…ASLR), 2721–2812 (PVTL…QSIT), 2900–2984 (PVVL…AEVT), 3078–3162 (PVVF…SKVS), 3258–3342 (PVDI…AKLC), 3348–3431 (NRFT…ARLL), 3527–3610 (PSIF…SSIV), 3616–3700 (PVRF…ATLT), 3785–3876 (ATLT…ATLT), 3881–3964 (PAKF…ATLT), 4042–4125 (PTKF…ATLS), 4130–4213 (PSRF…ATLS), 4219–4301 (PRFI…ATLN), 4307–4389 (PRFI…AVLT), 4395–4477 (PKFT…ATLS), 4483–4565 (PRFI…ATLS), 4571–4653 (PRFI…ATLS), 4659–4741 (PRFI…ATLS), 4746–4829 (PAKF…ATLS), 4833–4916 (PQVV…TSAT), 4923–5007 (PVRF…ARLS), 5013–5105 (PKFK…PEVT), 5378–5464 (LEVL…ARLS), and 5557–5659 (PQMV…TFNV). 14 disulfides stabilise this stretch: cysteine 885-cysteine 935, cysteine 977-cysteine 1027, cysteine 1069-cysteine 1119, cysteine 1161-cysteine 1211, cysteine 1253-cysteine 1303, cysteine 1345-cysteine 1395, cysteine 1437-cysteine 1487, cysteine 1529-cysteine 1579, cysteine 1621-cysteine 1671, cysteine 1713-cysteine 1763, cysteine 1805-cysteine 1855, cysteine 1897-cysteine 1947, cysteine 1989-cysteine 2039, and cysteine 2081-cysteine 2131. Cysteine 2263 and cysteine 2313 form a disulfide bridge. 8 disulfide bridges follow: cysteine 2620–cysteine 2669, cysteine 2743–cysteine 2793, cysteine 2922–cysteine 2972, cysteine 3100–cysteine 3150, cysteine 3280–cysteine 3330, cysteine 3369–cysteine 3419, cysteine 3549–cysteine 3599, and cysteine 3638–cysteine 3688. Position 3321 is a phosphoserine (serine 3321). Serine 3802 carries the phosphoserine modification. 14 disulfides stabilise this stretch: cysteine 3815–cysteine 3864, cysteine 3903–cysteine 3952, cysteine 4064–cysteine 4113, cysteine 4152–cysteine 4201, cysteine 4240–cysteine 4289, cysteine 4328–cysteine 4377, cysteine 4416–cysteine 4465, cysteine 4504–cysteine 4553, cysteine 4592–cysteine 4641, cysteine 4680–cysteine 4729, cysteine 4768–cysteine 4817, cysteine 4856–cysteine 4906, cysteine 4945–cysteine 4995, and cysteine 5034–cysteine 5086. Position 4960 is a phosphoserine (serine 4960). The region spanning 5471-5569 (PPEDAEVVGR…VKIAPAPAPA (99 aa)) is the Fibronectin type-III 2 domain. Cysteine 5590 and cysteine 5643 form a disulfide bridge. At serine 5699 the chain carries Phosphoserine. Positions 5700 to 5736 (REPTLDSISELPEEDSRVQHLRQEAEETAPDLSEGYS) are disordered. Threonine 5703 carries the phosphothreonine modification. A Phosphoserine modification is found at serine 5706. Residues 5713–5724 (EDSRVQHLRQEA) are compositionally biased toward basic and acidic residues. A Phosphothreonine modification is found at threonine 5737. Serine 5754 carries the post-translational modification Phosphoserine. The 30-residue stretch at 5821–5850 (LDKAAVKIQAAFKGYKVRKEMKQQEGPVFS) folds into the IQ domain. An Ig-like 48 domain is found at 5847–5930 (PVFSRTFGDT…QVSTKSGRVS (84 aa)). An intrachain disulfide couples cysteine 5868 to cysteine 5920. The interval 5977–5996 (EEELFLSADEGPGEPEEPAD) is disordered. 3 consecutive Ig-like domains span residues 6077–6166 (PVFL…AELR), 6209–6298 (PQVL…ARLL), and 6320–6416 (PRIL…LHIS). Cysteine 6098 and cysteine 6150 are oxidised to a cystine. A disordered region spans residues 6504–6546 (KLQVPGGDSDEETKTPSASPRHGRSRPSSSVQESSSESEDGDS). Serine 6512 carries the phosphoserine modification. Threonine 6518 is modified (phosphothreonine). A compositionally biased stretch (low complexity) spans 6519–6538 (PSASPRHGRSRPSSSVQESS). 2 positions are modified to phosphoserine: serine 6520 and serine 6522. An SH3 domain is found at 6549-6616 (EIFDIYVVTA…SPAYLDKRLK (68 aa)). The 185-residue stretch at 6642-6826 (RLSSVIQELL…SALPQRAENK (185 aa)) folds into the DH domain. The PH domain maps to 6844 to 6953 (EPIRQGHFIV…WVKEICGIQQ (110 aa)). Arginine 6924 serves as a coordination point for a 1,2-diacyl-sn-glycero-3-phospho-(1D-myo-inositol-4,5-bisphosphate). Arginine 6929 lines the a 1,2-diacyl-sn-glycero-3-phospho-(1D-myo-inositol-3,4-bisphosphate) pocket. Ig-like domains are found at residues 6963 to 7046 (PEFE…GNAS) and 7057 to 7147 (PRFV…GELY). Disulfide bonds link cysteine 6984/cysteine 7036 and cysteine 7078/cysteine 7131. Positions 7200-7257 (ALGPSPGDLPNTRQSEPPAFEEAASQIPGAASGTPEVSQPGTHKGLEQETTSSGSQGW) are disordered. Polar residues predominate over residues 7247 to 7257 (QETTSSGSQGW). An Ig-like 54 domain is found at 7306-7394 (PSMQVTIEDV…GQVLCKAELL (89 aa)). One can recognise a Protein kinase 1 domain in the interval 7416 to 7669 (YDVQEEIGRG…TSQCLAHPWF (254 aa)). ATP-binding positions include 7422-7430 (IGRGVFGFV) and lysine 7445. Catalysis depends on aspartate 7535, which acts as the Proton acceptor. Disordered regions lie at residues 7717–7810 (GPPD…SPGC), 7879–8106 (EQAS…TTRK), and 8150–8180 (SSEEQDEAATESPQPLESLGPIAEASGVPLR). Serine 7779 carries the post-translational modification Phosphoserine. The span at 7793 to 7804 (AAVPASPQSAGP) shows a compositional bias: low complexity. Residues 7941-7952 (TTAKDRGHKEGF) show a composition bias toward basic and acidic residues. A compositionally biased stretch (polar residues) spans 7986-7996 (SCHSELGSGSQ). Low complexity-rich tracts occupy residues 8000–8014 (GPPSSQSLGSLPPQS) and 8053–8073 (GSLSEGPVPVPSSSPGSASQV). Serine 8161 is subject to Phosphoserine. The region spanning 8380–8464 (KGRDQELSDE…VSNPLGTAVT (85 aa)) is the Ig-like 55 domain. Cysteine 8401 and cysteine 8453 are joined by a disulfide. Residues 8474–8566 (PSSSPRPEVG…PSEQVLLGGP (93 aa)) enclose the Fibronectin type-III 3 domain. One can recognise a Protein kinase 2 domain in the interval 8590–8842 (FAFQMQIRRG…ASTCLQCGWL (253 aa)). ATP is bound by residues 8596 to 8604 (IRRGRFSVV) and lysine 8619. Aspartate 8709 serves as the catalytic Proton acceptor.

Belongs to the protein kinase superfamily. CAMK Ser/Thr protein kinase family. In terms of assembly, interacts (via protein kinase domain 1) with CDH2 and (via protein kinase domain 1) with ATP1B1. Isoform 2 is found in a complex with DSG2, DESM, GJA1, CDH2 and VCL. Isoform 3 is found in a complex with DSG2, DESM, GJA1, CDH2, ANK3 and VCL. It depends on Mg(2+) as a cofactor. Post-translationally, autophosphorylated by protein kinase domain 1 and 2. In terms of processing, two small isoforms, one probably containing protein kinase domain 2 and a partial protein kinase domain 1 and one containing only protein kinase domain 2, are glycosylated. As to expression, expressed in skeletal muscles including flexor digitorum brevis (FDB), soleus and tibialis anterior muscles, and to a lesser extent in heart muscles (at protein level). Isoform 2 and isoform 3 are expressed in the myocardium (at protein level).

It is found in the cytoplasm. Its subcellular location is the myofibril. The protein localises to the sarcomere. It localises to the m line. The protein resides in the z line. It is found in the cell membrane. Its subcellular location is the sarcolemma. The protein localises to the nucleus. It localises to the secreted. The catalysed reaction is L-seryl-[protein] + ATP = O-phospho-L-seryl-[protein] + ADP + H(+). It catalyses the reaction L-threonyl-[protein] + ATP = O-phospho-L-threonyl-[protein] + ADP + H(+). Functionally, structural component of striated muscles which plays a role in myofibrillogenesis. Probably involved in the assembly of myosin into sarcomeric A bands in striated muscle. Has serine/threonine protein kinase activity and phosphorylates N-cadherin CDH2 and sodium/potassium-transporting ATPase subunit ATP1B1. Binds (via the PH domain) strongly to phosphatidylinositol 3,4-bisphosphate (PtdIns(3,4)P2) and phosphatidylinositol 4,5-bisphosphate (PtdIns(4,5)P2), and to a lesser extent to phosphatidylinositol 3-phosphate (PtdIns(3)P), phosphatidylinositol 4-phosphate (PtdIns(4)P), phosphatidylinositol 5-phosphate (PtdIns(5)P) and phosphatidylinositol 3,4,5-trisphosphate (PtdIns(3,4,5)P3). Its function is as follows. Isoform 2 and isoform 3: bind phosphatidylinositol bisphosphates (PIP2s) via their PH domains and negatively regulate the PI3K/AKT/mTOR signaling pathway, thus contributing to the regulation of cardiomyocyte size and adhesion. This chain is Obscurin, found in Mus musculus (Mouse).